The following is a 220-amino-acid chain: Thiopurine S-methyltransferase (220 aa).

Trp-14, Leu-49, Glu-70, and Arg-127 together coordinate S-adenosyl-L-methionine.

Belongs to the class I-like SAM-binding methyltransferase superfamily. TPMT family.

It localises to the cytoplasm. The enzyme catalyses S-adenosyl-L-methionine + a thiopurine = S-adenosyl-L-homocysteine + a thiopurine S-methylether.. This Gluconobacter oxydans (strain 621H) (Gluconobacter suboxydans) protein is Thiopurine S-methyltransferase.